The sequence spans 259 residues: Glutamate racemase (259 aa).

Substrate contacts are provided by residues 9-10 and 41-42; these read DS and YG. Residue C73 is the Proton donor/acceptor of the active site. 74–75 serves as a coordination point for substrate; that stretch reads NT. The active-site Proton donor/acceptor is C183. 184–185 contributes to the substrate binding site; that stretch reads TH.

This sequence belongs to the aspartate/glutamate racemases family.

It carries out the reaction L-glutamate = D-glutamate. Its pathway is cell wall biogenesis; peptidoglycan biosynthesis. In terms of biological role, provides the (R)-glutamate required for cell wall biosynthesis. The sequence is that of Glutamate racemase from Shewanella frigidimarina (strain NCIMB 400).